The following is a 214-amino-acid chain: Small ribosomal subunit protein eS6 (214 aa).

Belongs to the eukaryotic ribosomal protein eS6 family.

This chain is Small ribosomal subunit protein eS6 (rps6e), found in Saccharolobus islandicus (strain Y.G.57.14 / Yellowstone #1) (Sulfolobus islandicus).